The primary structure comprises 113 residues: Small ribosomal subunit protein uS15 (113 aa).

This sequence belongs to the universal ribosomal protein uS15 family. Part of the 30S ribosomal subunit. Forms a bridge to the 50S subunit in the 70S ribosome, contacting the 23S rRNA.

Its function is as follows. One of the primary rRNA binding proteins, it binds directly to 16S rRNA where it helps nucleate assembly of the platform of the 30S subunit by binding and bridging several RNA helices of the 16S rRNA. Functionally, forms an intersubunit bridge (bridge B4) with the 23S rRNA of the 50S subunit in the ribosome. The sequence is that of Small ribosomal subunit protein uS15 from Haemophilus influenzae (strain PittEE).